Consider the following 449-residue polypeptide: Tubulin alpha chain (449 aa).

An MREC motif motif is present at residues 1–4; sequence MREC. A GTP-binding site is contributed by Gln11. At Lys40 the chain carries N6-acetyllysine. Glu71, Ser140, Gly144, Thr145, Thr179, Asn206, and Asn228 together coordinate GTP. Glu71 is a Mg(2+) binding site. Residue Glu254 is part of the active site. At Glu443 the chain carries 5-glutamyl polyglutamate.

This sequence belongs to the tubulin family. In terms of assembly, dimer of alpha and beta chains. A typical microtubule is a hollow water-filled tube with an outer diameter of 25 nm and an inner diameter of 15 nM. Alpha-beta heterodimers associate head-to-tail to form protofilaments running lengthwise along the microtubule wall with the beta-tubulin subunit facing the microtubule plus end conferring a structural polarity. Microtubules usually have 13 protofilaments but different protofilament numbers can be found in some organisms and specialized cells. Mg(2+) is required as a cofactor. In terms of processing, some glutamate residues at the C-terminus are polyglycylated, resulting in polyglycine chains on the gamma-carboxyl group. Glycylation is mainly limited to tubulin incorporated into axonemes (cilia and flagella) whereas glutamylation is prevalent in neuronal cells, centrioles, axonemes, and the mitotic spindle. Both modifications can coexist on the same protein on adjacent residues, and lowering polyglycylation levels increases polyglutamylation, and reciprocally. The precise function of polyglycylation is still unclear. Post-translationally, some glutamate residues at the C-terminus are polyglutamylated, resulting in polyglutamate chains on the gamma-carboxyl group. Polyglutamylation plays a key role in microtubule severing by spastin (SPAST). SPAST preferentially recognizes and acts on microtubules decorated with short polyglutamate tails: severing activity by SPAST increases as the number of glutamates per tubulin rises from one to eight, but decreases beyond this glutamylation threshold. Acetylation of alpha chains at Lys-40 is located inside the microtubule lumen. This modification has been correlated with increased microtubule stability, intracellular transport and ciliary assembly. In terms of processing, undergoes a tyrosination/detyrosination cycle, the cyclic removal and re-addition of a C-terminal tyrosine residue by the enzymes tubulin tyrosine carboxypeptidase (MATCAP1, VASH1 or VASH2) and tubulin tyrosine ligase (TTL), respectively. Post-translationally, tyrosination promotes microtubule interaction with CAP-Gly microtubule plus-end tracking proteins. Tyrosinated tubulins regulate the initiation of dynein-driven motility. Detyrosination is involved in metaphase plate congression by guiding chromosomes during mitosis. Detyrosination increases microtubules-dependent mechanotransduction in dystrophic cardiac and skeletal muscle. In cardiomyocytes, detyrosinated microtubules are required to resist to contractile compression during contraction.

Its subcellular location is the cytoplasm. It localises to the cytoskeleton. The enzyme catalyses GTP + H2O = GDP + phosphate + H(+). Tubulin is the major constituent of microtubules, a cylinder consisting of laterally associated linear protofilaments composed of alpha- and beta-tubulin heterodimers. Microtubules grow by the addition of GTP-tubulin dimers to the microtubule end, where a stabilizing cap forms. Below the cap, tubulin dimers are in GDP-bound state, owing to GTPase activity of alpha-tubulin. This is Tubulin alpha chain (tuba) from Xenopus tropicalis (Western clawed frog).